Here is a 481-residue protein sequence, read N- to C-terminus: uncharacterized protein (481 aa).

A helical transmembrane segment spans residues 18–38 (FMIVTAIAVAIFVVITGVVIF).

It is found in the cell inner membrane. Involved in DNA conjugation in the recipient strain. This is an uncharacterized protein from Mycolicibacterium smegmatis (strain MKD8) (Mycobacterium smegmatis).